The primary structure comprises 325 residues: Protein UL76 (325 aa).

The interval 222–286 is disordered; the sequence is ARASAVAGGR…VRGGGAVEPA (65 aa). Over residues 247–258 the composition is skewed to low complexity; it reads GPGAQTVSASGA.

It belongs to the herpesviridae UL24 family.

It is found in the virion. Its subcellular location is the host cytoplasm. The protein resides in the host nucleus. The protein localises to the host nucleolus. It localises to the host Golgi apparatus. Functionally, may participate in nuclear egress of viral particles. Plays a role in the dispersal of several host nucleolar proteins including NCL/nucleolin and NPM1. Since deletion of host NCL/nucleolin negatively impact on nuclear egress, UL76 supposedly acts on this process through its effect on host nucleoli. Induces cell cycle arrest in host cells at the G2/M phase following by apoptosis. The mechanism involves the inhibition of host mitotic complex cyclinB/CDK1. This Human cytomegalovirus (strain Merlin) (HHV-5) protein is Protein UL76 (UL76).